A 727-amino-acid polypeptide reads, in one-letter code: Sodium-dependent neutral amino acid transporter SLC6A17 (727 aa).

The Cytoplasmic segment spans residues 1-68; the sequence is MPKNSKVTQR…DRPAWNSKLQ (68 aa). A phosphoserine mark is found at Ser-13 and Ser-20. Residues 69–89 form a helical membrane-spanning segment; that stretch reads YILAQIGFSVGLGNIWRFPYL. Residues 90–96 lie on the Extracellular side of the membrane; sequence CQKNGGG. A helical membrane pass occupies residues 97 to 116; it reads AYLVPYLVLLIIIGIPLFFL. Residues 117 to 140 are Cytoplasmic-facing; sequence ELAVGQRIRRGSIGVWHYVCPRLG. Residues 141–161 traverse the membrane as a helical segment; sequence GIGFSSCIVCLFVGLYYNVII. At 162–224 the chain is on the extracellular side; the sequence is GWSVFYFFKS…NSISESGGLN (63 aa). N-linked (GlcNAc...) asparagine glycosylation occurs at Asn-186. A helical transmembrane segment spans residues 225-243; it reads WKMTVCLLVAWSIVGMAVV. Residues 244–251 are Cytoplasmic-facing; that stretch reads KGIQSSGK. Residues 252–269 traverse the membrane as a helical segment; sequence VMYFSSLFPYVVLACFLV. Topologically, residues 270–304 are extracellular; that stretch reads RGLLLRGAVDGILHMFTPKLDKMLDPQVWREAATQ. The chain crosses the membrane as a helical span at residues 305 to 322; sequence VFFALGLGFGGVIAFSSY. Over 323 to 333 the chain is Cytoplasmic; sequence NKQDNNCHFDA. Residues 334–355 traverse the membrane as a helical segment; sequence ALVSFINFFTSVLATLVVFAVL. The Extracellular portion of the chain corresponds to 356–451; sequence GFKANIMNEK…FIAFTEAMTH (96 aa). Tyr-377 is subject to Phosphotyrosine. Asn-393 is a glycosylation site (N-linked (GlcNAc...) asparagine). A helical transmembrane segment spans residues 452–471; sequence FPASPFWSVMFFLMLINLGL. The Cytoplasmic segment spans residues 472–494; it reads GSMIGTMAGITTPIIDTFKVPKE. The helical transmembrane segment at 495–513 threads the bilayer; it reads MFTVGCCVFAFFVGLLFVQ. At 514 to 528 the chain is on the extracellular side; the sequence is RSGNYFVTMFDDYSA. The helical transmembrane segment at 529–549 threads the bilayer; sequence TLPLTVIVILENIAVAWIYGT. The Cytoplasmic portion of the chain corresponds to 550-569; sequence KKFMQELTEMLGFRPYRFYF. Residues 570-591 traverse the membrane as a helical segment; it reads YMWKFVSPLCMAVLTTASIIQL. Over 592-618 the chain is Extracellular; it reads GVSPPGYSAWIKEEAAERYLYFPNWAM. A helical transmembrane segment spans residues 619–641; it reads ALLITLIAVATLPIPVVFILRHF. Topologically, residues 642–727 are cytoplasmic; sequence HLLSDGSNTL…LLASTPESEL (86 aa). Residues Ser-665 and Ser-701 each carry the phosphoserine modification. The interval 680-727 is disordered; that stretch reads VPSEAPSPMPTHRSYLGPGSTSPLESSSHPNGRYGSGYLLASTPESEL. Polar residues predominate over residues 698 to 709; that stretch reads GSTSPLESSSHP.

This sequence belongs to the sodium:neurotransmitter symporter (SNF) (TC 2.A.22) family. In terms of tissue distribution, found exclusively in the central nervous system and is more abundant in the cerebellum and the cerebral cortex. Expressed in PC-12 cell line.

The protein localises to the cytoplasmic vesicle. It localises to the secretory vesicle. It is found in the synaptic vesicle membrane. Its subcellular location is the postsynapse. The protein resides in the presynapse. The enzyme catalyses L-proline(in) + Na(+)(in) = L-proline(out) + Na(+)(out). The catalysed reaction is L-leucine(in) + Na(+)(in) = L-leucine(out) + Na(+)(out). It carries out the reaction glycine(in) + Na(+)(in) = glycine(out) + Na(+)(out). It catalyses the reaction L-alanine(in) + Na(+)(in) = L-alanine(out) + Na(+)(out). The enzyme catalyses L-glutamine(in) + Na(+)(in) = L-glutamine(out) + Na(+)(out). Synaptic vesicle transporter with apparent selectivity for neutral amino acids. The transport is sodium-coupled but chloride-independent, likely driven by the proton electrochemical gradient generated by vacuolar H(+)-ATPase in an overall electrogenic mechanism. May contribute to the synaptic uptake of neurotransmitter precursors in a process coupled in part to vesicle exocytosis. This chain is Sodium-dependent neutral amino acid transporter SLC6A17, found in Rattus norvegicus (Rat).